The following is a 369-amino-acid chain: Deoxyhypusine synthase (369 aa).

NAD(+) contacts are provided by residues 105 to 109, 131 to 133, Glu-137, and Asp-238; these read SNLIS and TAG. 136 to 137 provides a ligand contact to spermidine; the sequence is EE. Asp-243 is a binding site for spermidine. An NAD(+)-binding site is contributed by Gly-283. Position 288 (His-288) interacts with spermidine. 308–309 is an NAD(+) binding site; it reads TA. Spermidine contacts are provided by residues 314 to 316 and 323 to 329; these read GSD and EAVSWGK. Residue Lys-329 is the Nucleophile of the active site. Residue 342 to 343 coordinates NAD(+); that stretch reads DA.

It belongs to the deoxyhypusine synthase family. It depends on NAD(+) as a cofactor.

The enzyme catalyses [eIF5A protein]-L-lysine + spermidine = [eIF5A protein]-deoxyhypusine + propane-1,3-diamine. It participates in protein modification; eIF5A hypusination. Functionally, catalyzes the NAD-dependent oxidative cleavage of spermidine and the subsequent transfer of the butylamine moiety of spermidine to the epsilon-amino group of a critical lysine residue of the eIF-5A precursor protein to form the intermediate deoxyhypusine residue. This is the first step of the post-translational modification of that lysine into an unusual amino acid residue named hypusine. Hypusination is unique to mature eIF-5A factor and is essential for its function. The protein is Deoxyhypusine synthase (Dhps) of Mus musculus (Mouse).